The following is a 111-amino-acid chain: Nucleoid-associated protein NMC1380 (111 aa).

This sequence belongs to the YbaB/EbfC family. Homodimer.

It is found in the cytoplasm. The protein localises to the nucleoid. Functionally, binds to DNA and alters its conformation. May be involved in regulation of gene expression, nucleoid organization and DNA protection. The sequence is that of Nucleoid-associated protein NMC1380 from Neisseria meningitidis serogroup C / serotype 2a (strain ATCC 700532 / DSM 15464 / FAM18).